The following is a 453-amino-acid chain: UDP-N-acetylmuramate--L-alanyl-gamma-D-glutamyl-meso-2,6-diaminoheptandioate ligase (453 aa).

ATP is bound at residue 111 to 117 (GTHGKTT).

Belongs to the MurCDEF family. Mpl subfamily. It depends on Mg(2+) as a cofactor.

It carries out the reaction UDP-N-acetyl-alpha-D-muramate + L-alanyl-gamma-D-glutamyl-meso-2,6-diaminopimelate + ATP = UDP-N-acetyl-alpha-D-muramoyl-L-alanyl-gamma-D-glutamyl-meso-2,6-diaminopimelate + ADP + phosphate + H(+). The protein operates within cell wall biogenesis; peptidoglycan recycling. Functionally, reutilizes the intact tripeptide L-alanyl-gamma-D-glutamyl-meso-diaminopimelate by linking it to UDP-N-acetylmuramate. This chain is UDP-N-acetylmuramate--L-alanyl-gamma-D-glutamyl-meso-2,6-diaminoheptandioate ligase, found in Haemophilus influenzae (strain ATCC 51907 / DSM 11121 / KW20 / Rd).